The chain runs to 626 residues: FAD-binding monooxygenase moxY (626 aa).

The span at 1-23 (MAPFLSAHGESASSSSSSSPTPS) shows a compositional bias: low complexity. A disordered region spans residues 1–47 (MAPFLSAHGESASSSSSSSPTPSRHTRNQHVDYSTPGSTGYNIPQNT). Polar residues predominate over residues 31-47 (VDYSTPGSTGYNIPQNT). Residues 96-99 (TWLE), 108-109 (DI), and tyrosine 114 each bind FAD. 106–108 (GCD) serves as a coordination point for NADP(+). Residues 243–249 (SGASSIQ) and 266–267 (RT) each bind NADP(+).

Belongs to the FAD-binding monooxygenase family. The cofactor is FAD.

It functions in the pathway mycotoxin biosynthesis. Functionally, FAD-binding monooxygenase; part of the fragmented gene cluster that mediates the biosynthesis of dothistromin (DOTH), a polyketide toxin very similar in structure to the aflatoxin precursor, versicolorin B. The first step of the pathway is the conversion of acetate to norsolorinic acid (NOR) and requires the fatty acid synthase subunits hexA and hexB, as well as the polyketide synthase pksA. PksA combines a hexanoyl starter unit and 7 malonyl-CoA extender units to synthesize the precursor NOR. The hexanoyl starter unit is provided to the acyl-carrier protein (ACP) domain by the fungal fatty acid synthase hexA/hexB. The second step is the conversion of NOR to averantin (AVN) and requires the norsolorinic acid ketoreductase nor1, which catalyzes the dehydration of norsolorinic acid to form (1'S)-averantin. The cytochrome P450 monooxygenase avnA then catalyzes the hydroxylation of AVN to 5'hydroxyaverantin (HAVN). The next step is performed by adhA that transforms HAVN to averufin (AVF). Averufin might then be converted to hydroxyversicolorone by cypX and avfA. Hydroxyversicolorone is further converted versiconal hemiacetal acetate (VHA) by moxY. VHA is then the substrate for the versiconal hemiacetal acetate esterase est1 to yield versiconal (VAL). Versicolorin B synthase vbsA then converts VAL to versicolorin B (VERB) by closing the bisfuran ring. Then, the activity of the versicolorin B desaturase verB leads to versicolorin A (VERA). DotB, a predicted chloroperoxidase, may perform epoxidation of the A-ring of VERA. Alternatively, a cytochrome P450, such as cypX or avnA could catalyze this step. It is also possible that another, uncharacterized, cytochrome P450 enzyme is responsible for this step. Opening of the epoxide could potentially be achieved by the epoxide hydrolase epoA. However, epoA seems not to be required for DOTH biosynthesis, but other epoxide hydrolases may have the ability to complement this hydrolysis. Alternatively, opening of the epoxide ring could be achieved non-enzymatically. The next step is the deoxygenation of ring A to yield the 5,8-dihydroxyanthraquinone which is most likely catalyzed by the NADPH dehydrogenase encoded by ver1. The last stages of DOTH biosynthesis are proposed to involve hydroxylation of the bisfuran. OrdB and norB might have oxidative roles here. An alternative possibility is that cytochrome P450 monoogenases such as avnA and cypX might perform these steps in addition to previously proposed steps. This is FAD-binding monooxygenase moxY from Dothistroma septosporum (Red band needle blight fungus).